A 199-amino-acid polypeptide reads, in one-letter code: Transmembrane protein 9B (199 aa).

The signal sequence occupies residues 1 to 34; sequence MASLWCGNLLRLGSGLSMSCLALSVLLLAQLTGA. Asn-61 is a glycosylation site (N-linked (GlcNAc...) asparagine). A helical membrane pass occupies residues 106–126; it reads IIIYLSILGLLLLYMVYLTLV. 2 positions are modified to phosphoserine: Ser-143 and Ser-190.

This sequence belongs to the TMEM9 family. Post-translationally, N-glycosylated.

The protein resides in the lysosome membrane. It localises to the early endosome membrane. Its function is as follows. Enhances production of pro-inflammatory cytokines induced by TNF, IL1B, and TLR ligands. Has a role in TNF activation of both the NF-kappaB and MAPK pathways. In Mus musculus (Mouse), this protein is Transmembrane protein 9B (Tmem9b).